The primary structure comprises 467 residues: 2-succinylbenzoate--CoA ligase (467 aa).

This sequence belongs to the ATP-dependent AMP-binding enzyme family. MenE subfamily.

It carries out the reaction 2-succinylbenzoate + ATP + CoA = 2-succinylbenzoyl-CoA + AMP + diphosphate. It functions in the pathway quinol/quinone metabolism; 1,4-dihydroxy-2-naphthoate biosynthesis; 1,4-dihydroxy-2-naphthoate from chorismate: step 5/7. The protein operates within quinol/quinone metabolism; menaquinone biosynthesis. In terms of biological role, converts 2-succinylbenzoate (OSB) to 2-succinylbenzoyl-CoA (OSB-CoA). The polypeptide is 2-succinylbenzoate--CoA ligase (Listeria monocytogenes serotype 4b (strain F2365)).